The primary structure comprises 415 residues: Multidrug resistance protein MdtA (415 aa).

Positions 1–21 are cleaved as a signal peptide; the sequence is MKGSYKSRWVIVIVVVIAAIA. Disordered regions lie at residues 32-59 and 392-415; these read SRSA…SGPL and EAQS…GARS. The span at 399-415 shows a compositional bias: basic and acidic residues; that stretch reads SEEKATSREYAKKGARS.

The protein belongs to the membrane fusion protein (MFP) (TC 8.A.1) family. As to quaternary structure, part of a tripartite efflux system composed of MdtA, MdtB and MdtC.

It is found in the cell inner membrane. In terms of biological role, the MdtABC tripartite complex confers resistance against novobiocin and deoxycholate. In Escherichia coli (strain SMS-3-5 / SECEC), this protein is Multidrug resistance protein MdtA.